We begin with the raw amino-acid sequence, 544 residues long: Chaperonin GroEL 2 (544 aa).

ATP contacts are provided by residues 29-32 (TLGP), 86-90 (DGTTT), Gly413, 479-481 (NAA), and Asp495.

The protein belongs to the chaperonin (HSP60) family. In terms of assembly, forms a cylinder of 14 subunits composed of two heptameric rings stacked back-to-back. Interacts with the co-chaperonin GroES.

The protein localises to the cytoplasm. The catalysed reaction is ATP + H2O + a folded polypeptide = ADP + phosphate + an unfolded polypeptide.. In terms of biological role, together with its co-chaperonin GroES, plays an essential role in assisting protein folding. The GroEL-GroES system forms a nano-cage that allows encapsulation of the non-native substrate proteins and provides a physical environment optimized to promote and accelerate protein folding. The polypeptide is Chaperonin GroEL 2 (Prochlorococcus marinus (strain MIT 9515)).